We begin with the raw amino-acid sequence, 220 residues long: Peptidyl-tRNA hydrolase (220 aa).

Tyrosine 14 provides a ligand contact to tRNA. The active-site Proton acceptor is the histidine 19. TRNA contacts are provided by phenylalanine 66, asparagine 68, and asparagine 114. The disordered stretch occupies residues 184 to 220; sequence QAFNSTDLRPRPEPVPAPQPADVSGPQETGPAERPEV.

It belongs to the PTH family. Monomer.

It localises to the cytoplasm. It carries out the reaction an N-acyl-L-alpha-aminoacyl-tRNA + H2O = an N-acyl-L-amino acid + a tRNA + H(+). Its function is as follows. Hydrolyzes ribosome-free peptidyl-tRNAs (with 1 or more amino acids incorporated), which drop off the ribosome during protein synthesis, or as a result of ribosome stalling. In terms of biological role, catalyzes the release of premature peptidyl moieties from peptidyl-tRNA molecules trapped in stalled 50S ribosomal subunits, and thus maintains levels of free tRNAs and 50S ribosomes. The chain is Peptidyl-tRNA hydrolase from Deinococcus deserti (strain DSM 17065 / CIP 109153 / LMG 22923 / VCD115).